We begin with the raw amino-acid sequence, 326 residues long: rRNA 2'-O-methyltransferase fibrillarin (326 aa).

A disordered region spans residues 1–84; sequence MAFQPGSRGG…GGARGGAKGG (84 aa). Positions 7–83 are enriched in gly residues; the sequence is SRGGRGGARG…RGGARGGAKG (77 aa). Asymmetric dimethylarginine is present on residues Arg8, Arg11, Arg15, Arg19, Arg23, Arg26, Arg32, Arg36, Arg39, Arg45, Arg49, Arg55, Arg59, Arg63, Arg67, Arg71, Arg74, and Arg78. Residues 180 to 181, 199 to 200, 224 to 225, and 244 to 247 each bind S-adenosyl-L-methionine; these read TS, EF, DA, and DVAQ.

This sequence belongs to the methyltransferase superfamily. Fibrillarin family. As to quaternary structure, component of box C/D small nucleolar ribonucleoprotein (snoRNP) particles that contain SNU13, NOP1, SIK1/NOP56 and NOP58, plus a guide RNA. Post-translationally, by homology to other fibrillarins, some or all of the N-terminal domain arginines are modified to asymmetric dimethylarginine (DMA).

The protein localises to the nucleus. Its subcellular location is the nucleolus. The catalysed reaction is L-glutaminyl-[histone H2A] + S-adenosyl-L-methionine = N(5)-methyl-L-glutaminyl-[histone H2A] + S-adenosyl-L-homocysteine + H(+). S-adenosyl-L-methionine-dependent methyltransferase that has the ability to methylate both RNAs and proteins. Involved in pre-rRNA processing. Utilizes the methyl donor S-adenosyl-L-methionine to catalyze the site-specific 2'-hydroxyl methylation of ribose moieties in pre-ribosomal RNA. Site specificity is provided by a guide RNA that base pairs with the substrate. Methylation occurs at a characteristic distance from the sequence involved in base pairing with the guide RNA. Also acts as a protein methyltransferase by mediating methylation of 'Gln-105' of histone H2A (H2AQ105me), a modification that impairs binding of the FACT complex and is specifically present at 35S ribosomal DNA locus. The polypeptide is rRNA 2'-O-methyltransferase fibrillarin (NOP1) (Eremothecium gossypii (strain ATCC 10895 / CBS 109.51 / FGSC 9923 / NRRL Y-1056) (Yeast)).